The primary structure comprises 398 residues: S-adenosylmethionine synthase (398 aa).

136–141 (GTGSSD) lines the ATP pocket.

Belongs to the AdoMet synthase 2 family. It depends on Mg(2+) as a cofactor.

It carries out the reaction L-methionine + ATP + H2O = S-adenosyl-L-methionine + phosphate + diphosphate. Its pathway is amino-acid biosynthesis; S-adenosyl-L-methionine biosynthesis; S-adenosyl-L-methionine from L-methionine: step 1/1. Catalyzes the formation of S-adenosylmethionine from methionine and ATP. The protein is S-adenosylmethionine synthase of Methanosarcina mazei (strain ATCC BAA-159 / DSM 3647 / Goe1 / Go1 / JCM 11833 / OCM 88) (Methanosarcina frisia).